A 164-amino-acid chain; its full sequence is UPF0114 protein Sbal223_3668 (164 aa).

4 consecutive transmembrane segments (helical) span residues 15–35 (IMAP…IKFF), 53–73 (LVLV…IVMV), 108–128 (KVAA…FMDV), and 136–156 (IMWY…MGYL).

The protein belongs to the UPF0114 family.

The protein localises to the cell membrane. This is UPF0114 protein Sbal223_3668 from Shewanella baltica (strain OS223).